The following is a 246-amino-acid chain: UDP-N-acetyl-D-mannosaminuronic acid transferase (246 aa).

It belongs to the glycosyltransferase 26 family.

It carries out the reaction UDP-N-acetyl-alpha-D-mannosaminouronate + N-acetyl-alpha-D-glucosaminyl-di-trans,octa-cis-undecaprenyl diphosphate = beta-D-ManNAcA-(1-&gt;4)-alpha-D-GlcNAc-di-trans,octa-cis-undecaprenyl diphosphate + UDP + H(+). Its pathway is bacterial outer membrane biogenesis; enterobacterial common antigen biosynthesis. Its function is as follows. Catalyzes the synthesis of Und-PP-GlcNAc-ManNAcA (Lipid II), the second lipid-linked intermediate involved in enterobacterial common antigen (ECA) synthesis. The chain is UDP-N-acetyl-D-mannosaminuronic acid transferase from Shigella flexneri.